Here is a 114-residue protein sequence, read N- to C-terminus: Immunoglobulin kappa variable 6D-21 (114 aa).

The first 19 residues, 1–19 (MSPSQLIGFLLLWVPASRG), serve as a signal peptide directing secretion. The framework-1 stretch occupies residues 20–42 (EIVLTQSPDFQSVTPKEKVTITC). The 95-residue stretch at 20–114 (EIVLTQSPDF…YYCHQSSSLP (95 aa)) folds into the Ig-like domain. An intrachain disulfide couples cysteine 42 to cysteine 107. The interval 43 to 53 (RASQSIGSSLH) is complementarity-determining-1. The framework-2 stretch occupies residues 54 to 68 (WYQQKPDQSPKLLIK). The interval 69–75 (YASQSIS) is complementarity-determining-2. The framework-3 stretch occupies residues 76–107 (GVPSRFSGSGSGTDFTLTINSLEAEDAAAYYC). The complementarity-determining-3 stretch occupies residues 108–114 (HQSSSLP).

In terms of assembly, immunoglobulins are composed of two identical heavy chains and two identical light chains; disulfide-linked.

Its subcellular location is the secreted. It is found in the cell membrane. V region of the variable domain of immunoglobulin light chains that participates in the antigen recognition. Immunoglobulins, also known as antibodies, are membrane-bound or secreted glycoproteins produced by B lymphocytes. In the recognition phase of humoral immunity, the membrane-bound immunoglobulins serve as receptors which, upon binding of a specific antigen, trigger the clonal expansion and differentiation of B lymphocytes into immunoglobulins-secreting plasma cells. Secreted immunoglobulins mediate the effector phase of humoral immunity, which results in the elimination of bound antigens. The antigen binding site is formed by the variable domain of one heavy chain, together with that of its associated light chain. Thus, each immunoglobulin has two antigen binding sites with remarkable affinity for a particular antigen. The variable domains are assembled by a process called V-(D)-J rearrangement and can then be subjected to somatic hypermutations which, after exposure to antigen and selection, allow affinity maturation for a particular antigen. The protein is Immunoglobulin kappa variable 6D-21 of Homo sapiens (Human).